The chain runs to 250 residues: UPF0494 membrane protein PB2B2.07c (250 aa).

3 helical membrane-spanning segments follow: residues 98–118 (WPLL…NFEV), 144–164 (IAIY…MFPL), and 179–199 (MIIA…GATI).

It belongs to the UPF0494 family.

It is found in the cytoplasm. It localises to the endoplasmic reticulum. The protein resides in the golgi apparatus. The protein localises to the membrane. The polypeptide is UPF0494 membrane protein PB2B2.07c (Schizosaccharomyces pombe (strain 972 / ATCC 24843) (Fission yeast)).